Reading from the N-terminus, the 262-residue chain is MNSSFSAPAKKSLGQHFLADRYYIDRIVQAVDPRAGQHLVEIGPGQGAITFPLLRRHGALTVIEFDRDLIAPLTEVAAPIGALSIIHRDVLSVDFTALANGTPIRLVGNLPYNISSPILFHALDHAAAVADMHFMLQKEVVDRMAAGPGSKVYGRLSVMLQAYCEVTALFVVPPGAFRPPPKVDSAVVRLVPRDPATVQINDRRRFADVVRAGFGQRRKTLRNALSTICEPAHFDAAQVRPDARAEQLEVADFIRLANVELA.

S-adenosyl-L-methionine contacts are provided by His-16, Leu-18, Gly-43, Glu-64, Asp-89, and Asn-109.

Belongs to the class I-like SAM-binding methyltransferase superfamily. rRNA adenine N(6)-methyltransferase family. RsmA subfamily.

It is found in the cytoplasm. The enzyme catalyses adenosine(1518)/adenosine(1519) in 16S rRNA + 4 S-adenosyl-L-methionine = N(6)-dimethyladenosine(1518)/N(6)-dimethyladenosine(1519) in 16S rRNA + 4 S-adenosyl-L-homocysteine + 4 H(+). Its function is as follows. Specifically dimethylates two adjacent adenosines (A1518 and A1519) in the loop of a conserved hairpin near the 3'-end of 16S rRNA in the 30S particle. May play a critical role in biogenesis of 30S subunits. The polypeptide is Ribosomal RNA small subunit methyltransferase A (Xanthomonas euvesicatoria pv. vesicatoria (strain 85-10) (Xanthomonas campestris pv. vesicatoria)).